The chain runs to 631 residues: Phosphomethylpyrimidine synthase (631 aa).

Substrate contacts are provided by residues Asn239, Met268, Tyr297, His333, 353-355 (SRG), 394-397 (DGLR), and Glu433. A Zn(2+)-binding site is contributed by His437. Substrate is bound at residue Tyr460. A Zn(2+)-binding site is contributed by His501. [4Fe-4S] cluster contacts are provided by Cys581, Cys584, and Cys589.

Belongs to the ThiC family. As to quaternary structure, homodimer. It depends on [4Fe-4S] cluster as a cofactor.

It catalyses the reaction 5-amino-1-(5-phospho-beta-D-ribosyl)imidazole + S-adenosyl-L-methionine = 4-amino-2-methyl-5-(phosphooxymethyl)pyrimidine + CO + 5'-deoxyadenosine + formate + L-methionine + 3 H(+). It functions in the pathway cofactor biosynthesis; thiamine diphosphate biosynthesis. Its function is as follows. Catalyzes the synthesis of the hydroxymethylpyrimidine phosphate (HMP-P) moiety of thiamine from aminoimidazole ribotide (AIR) in a radical S-adenosyl-L-methionine (SAM)-dependent reaction. The polypeptide is Phosphomethylpyrimidine synthase (Salmonella heidelberg (strain SL476)).